The following is a 367-amino-acid chain: Glutamate 5-kinase (367 aa).

Residue Lys10 participates in ATP binding. Residues Ser50, Asp137, and Asn149 each contribute to the substrate site. ATP contacts are provided by residues 169-170 (TD) and 211-217 (TGGMSTK). The region spanning 275-353 (AGEITVDEGA…QQIDAILGYE (79 aa)) is the PUA domain.

Belongs to the glutamate 5-kinase family.

The protein localises to the cytoplasm. It carries out the reaction L-glutamate + ATP = L-glutamyl 5-phosphate + ADP. It participates in amino-acid biosynthesis; L-proline biosynthesis; L-glutamate 5-semialdehyde from L-glutamate: step 1/2. Its function is as follows. Catalyzes the transfer of a phosphate group to glutamate to form L-glutamate 5-phosphate. The sequence is that of Glutamate 5-kinase from Salmonella arizonae (strain ATCC BAA-731 / CDC346-86 / RSK2980).